A 227-amino-acid chain; its full sequence is MKFAVIQFPGSNCDLDMLHAIRDSLGEEAEYIWHAETSLAGFDAVLLPGGFSYGDYLRTGAIAKFSSIMPEVLRFAEMGKPVLGVCNGFQILTEIGLLPGALIRNNNLHFICKTVPLRVANASTMFTELYEEGEIIQVPVAHGEGNYYCDDETLLKLKENNQIVFTYDSVNPNGSRADIAGIVNERGNVLGMMPHPERAVEEIIGGTDGLRLFESVVKAWKEEQVNA.

The 225-residue stretch at 2 to 226 (KFAVIQFPGS…VKAWKEEQVN (225 aa)) folds into the Glutamine amidotransferase type-1 domain. Cysteine 86 serves as the catalytic Nucleophile. Active-site residues include histidine 195 and glutamate 197.

In terms of assembly, part of the FGAM synthase complex composed of 1 PurL, 1 PurQ and 2 PurS subunits.

The protein resides in the cytoplasm. The catalysed reaction is N(2)-formyl-N(1)-(5-phospho-beta-D-ribosyl)glycinamide + L-glutamine + ATP + H2O = 2-formamido-N(1)-(5-O-phospho-beta-D-ribosyl)acetamidine + L-glutamate + ADP + phosphate + H(+). It catalyses the reaction L-glutamine + H2O = L-glutamate + NH4(+). Its pathway is purine metabolism; IMP biosynthesis via de novo pathway; 5-amino-1-(5-phospho-D-ribosyl)imidazole from N(2)-formyl-N(1)-(5-phospho-D-ribosyl)glycinamide: step 1/2. Part of the phosphoribosylformylglycinamidine synthase complex involved in the purines biosynthetic pathway. Catalyzes the ATP-dependent conversion of formylglycinamide ribonucleotide (FGAR) and glutamine to yield formylglycinamidine ribonucleotide (FGAM) and glutamate. The FGAM synthase complex is composed of three subunits. PurQ produces an ammonia molecule by converting glutamine to glutamate. PurL transfers the ammonia molecule to FGAR to form FGAM in an ATP-dependent manner. PurS interacts with PurQ and PurL and is thought to assist in the transfer of the ammonia molecule from PurQ to PurL. The protein is Phosphoribosylformylglycinamidine synthase subunit PurQ of Listeria monocytogenes serovar 1/2a (strain ATCC BAA-679 / EGD-e).